The chain runs to 303 residues: Kynurenine formamidase (303 aa).

An HGGXW motif is present at residues 95-99; that stretch reads HGGYW. Ser-164 acts as the Nucleophile in catalysis. Catalysis depends on residues Asp-247 and His-279.

It belongs to the kynurenine formamidase family. As to quaternary structure, homodimer.

Its subcellular location is the cytoplasm. The protein resides in the cytosol. It is found in the nucleus. The enzyme catalyses N-formyl-L-kynurenine + H2O = L-kynurenine + formate + H(+). It functions in the pathway amino-acid degradation; L-tryptophan degradation via kynurenine pathway; L-kynurenine from L-tryptophan: step 2/2. In terms of biological role, catalyzes the hydrolysis of N-formyl-L-kynurenine to L-kynurenine, the second step in the kynurenine pathway of tryptophan degradation. Kynurenine may be further oxidized to nicotinic acid, NAD(H) and NADP(H). Required for elimination of toxic metabolites. This is Kynurenine formamidase from Homo sapiens (Human).